A 407-amino-acid chain; its full sequence is MKIYLVGGAVRDSLLNIDVKDKDWVVVGSTPQEMGSLGYQTVGQDFPVFLHPKTKEEYALARTERKSGQGYKGFTCYAEPDVTLEEDLLRRDLTINAIAQADNGELIDPYNGQQDIIDRTLRHVSDAFTEDPLRVLRVARFAARFHHLGFTIAHETMNLMKVLVDSGELSHLTAERVWQEWQKSLSSQHPEIFLSTLKECGALAIVLPELNALFGVPQPEKWHPEIDSGIHTLMVAQQAALLSQDLPTRFAAQVHDLGKGVTPESEWPSHKLHCHTGIKLIKRLCDRVRVPNDYRDLALLVCEHHSNIHRAAELRAQTFIKIFDKMDVWRKPERLAPILLCCQADHAGRLGLETQPYPQKQRFEAAFDAAKMVEVKEVVAAGFKGQEIRDELNKRRIEAVKDKLDIK.

G8 and R11 together coordinate ATP. Residues G8 and R11 each contribute to the CTP site. Mg(2+) contacts are provided by D21 and D23. ATP contacts are provided by R91, R137, and R140. Positions 91, 137, and 140 each coordinate CTP. One can recognise an HD domain in the interval 228–329 (SGIHTLMVAQ…IKIFDKMDVW (102 aa)).

This sequence belongs to the tRNA nucleotidyltransferase/poly(A) polymerase family. Bacterial CCA-adding enzyme type 1 subfamily. Monomer. Can also form homodimers and oligomers. Mg(2+) is required as a cofactor. Ni(2+) serves as cofactor.

The catalysed reaction is a tRNA precursor + 2 CTP + ATP = a tRNA with a 3' CCA end + 3 diphosphate. It catalyses the reaction a tRNA with a 3' CCA end + 2 CTP + ATP = a tRNA with a 3' CCACCA end + 3 diphosphate. Catalyzes the addition and repair of the essential 3'-terminal CCA sequence in tRNAs without using a nucleic acid template. Adds these three nucleotides in the order of C, C, and A to the tRNA nucleotide-73, using CTP and ATP as substrates and producing inorganic pyrophosphate. tRNA 3'-terminal CCA addition is required both for tRNA processing and repair. Also involved in tRNA surveillance by mediating tandem CCA addition to generate a CCACCA at the 3' terminus of unstable tRNAs. While stable tRNAs receive only 3'-terminal CCA, unstable tRNAs are marked with CCACCA and rapidly degraded. This Aliivibrio fischeri (strain MJ11) (Vibrio fischeri) protein is Multifunctional CCA protein.